A 555-amino-acid polypeptide reads, in one-letter code: Phosphomethylpyrimidine synthase (555 aa).

Substrate is bound by residues Asn-191, Met-220, Tyr-249, His-285, 305–307, 346–349, and Glu-385; these read SRG and DGLR. His-389 contacts Zn(2+). Tyr-412 is a substrate binding site. Zn(2+) is bound at residue His-453. [4Fe-4S] cluster is bound by residues Cys-533, Cys-536, and Cys-541.

It belongs to the ThiC family. Homodimer. [4Fe-4S] cluster serves as cofactor.

It carries out the reaction 5-amino-1-(5-phospho-beta-D-ribosyl)imidazole + S-adenosyl-L-methionine = 4-amino-2-methyl-5-(phosphooxymethyl)pyrimidine + CO + 5'-deoxyadenosine + formate + L-methionine + 3 H(+). The protein operates within cofactor biosynthesis; thiamine diphosphate biosynthesis. Catalyzes the synthesis of the hydroxymethylpyrimidine phosphate (HMP-P) moiety of thiamine from aminoimidazole ribotide (AIR) in a radical S-adenosyl-L-methionine (SAM)-dependent reaction. The polypeptide is Phosphomethylpyrimidine synthase (Ehrlichia ruminantium (strain Welgevonden)).